Here is a 218-residue protein sequence, read N- to C-terminus: MTQDELKRKVAEAALDYVKDVTILGVGTGSTVNHFIDLLADLKGGIEGAVSSSQASSERLKKIGIPVLDLNAAGTLDVYVDGADEVNAAKQMIKGGGAALTREKIVAEASRKFVCIVDETKCVDVLGKFPLPVEVIPMARSLVARRLVELGGTPVWRENCITDNGNVILDVHNLTITDPVELERRINDIPGVVCNGVFALRPADVVLIGSPSGVRTLP.

Substrate-binding positions include 28–31, 81–84, and 94–97; these read TGST, DGAD, and KGGG. The Proton acceptor role is filled by Glu-103. Lys-121 is a substrate binding site.

Belongs to the ribose 5-phosphate isomerase family. In terms of assembly, homodimer.

It catalyses the reaction aldehydo-D-ribose 5-phosphate = D-ribulose 5-phosphate. The protein operates within carbohydrate degradation; pentose phosphate pathway; D-ribose 5-phosphate from D-ribulose 5-phosphate (non-oxidative stage): step 1/1. Catalyzes the reversible conversion of ribose-5-phosphate to ribulose 5-phosphate. The protein is Ribose-5-phosphate isomerase A of Methylococcus capsulatus (strain ATCC 33009 / NCIMB 11132 / Bath).